The sequence spans 276 residues: 2-dehydro-3-deoxyphosphooctonate aldolase (276 aa).

Belongs to the KdsA family.

It localises to the cytoplasm. The catalysed reaction is D-arabinose 5-phosphate + phosphoenolpyruvate + H2O = 3-deoxy-alpha-D-manno-2-octulosonate-8-phosphate + phosphate. The protein operates within carbohydrate biosynthesis; 3-deoxy-D-manno-octulosonate biosynthesis; 3-deoxy-D-manno-octulosonate from D-ribulose 5-phosphate: step 2/3. It participates in bacterial outer membrane biogenesis; lipopolysaccharide biosynthesis. The sequence is that of 2-dehydro-3-deoxyphosphooctonate aldolase from Helicobacter pylori (strain Shi470).